Reading from the N-terminus, the 116-residue chain is Ferredoxin (116 aa).

4Fe-4S ferredoxin-type domains are found at residues 2–31 (TYVVTDECVKCKYTDCVEVCPVDCFYEGER) and 35–64 (FMLVINPDECIDCGVCVPDCPIGAIKPESP). C9 and C17 together coordinate [3Fe-4S] cluster. [4Fe-4S] cluster-binding residues include C21, C44, C47, and C50. Position 54 (C54) interacts with [3Fe-4S] cluster.

The cofactor is [4Fe-4S] cluster. [3Fe-4S] cluster serves as cofactor.

In terms of biological role, ferredoxins are iron-sulfur proteins that transfer electrons in a wide variety of metabolic reactions. This Rickettsia conorii (strain ATCC VR-613 / Malish 7) protein is Ferredoxin (fdxA).